We begin with the raw amino-acid sequence, 224 residues long: Ribose-5-phosphate isomerase A (224 aa).

Residues threonine 32 to threonine 35, aspartate 85 to aspartate 88, and lysine 98 to glycine 101 contribute to the substrate site. Glutamate 107 serves as the catalytic Proton acceptor. Position 125 (lysine 125) interacts with substrate.

The protein belongs to the ribose 5-phosphate isomerase family. As to quaternary structure, homodimer.

The catalysed reaction is aldehydo-D-ribose 5-phosphate = D-ribulose 5-phosphate. Its pathway is carbohydrate degradation; pentose phosphate pathway; D-ribose 5-phosphate from D-ribulose 5-phosphate (non-oxidative stage): step 1/1. Catalyzes the reversible conversion of ribose-5-phosphate to ribulose 5-phosphate. This chain is Ribose-5-phosphate isomerase A, found in Pseudomonas putida (strain GB-1).